The following is a 385-amino-acid chain: 1-deoxy-D-xylulose 5-phosphate reductoisomerase (385 aa).

Residues S10, G11, S12, I13, G36, N38, and N124 each contribute to the NADPH site. K125 provides a ligand contact to 1-deoxy-D-xylulose 5-phosphate. E126 serves as a coordination point for NADPH. Mn(2+) is bound at residue D150. Residues S151, E152, S176, and H198 each coordinate 1-deoxy-D-xylulose 5-phosphate. E152 is a Mn(2+) binding site. G204 provides a ligand contact to NADPH. Residues S211, N216, K217, and E220 each coordinate 1-deoxy-D-xylulose 5-phosphate. E220 is a binding site for Mn(2+).

Belongs to the DXR family. Mg(2+) is required as a cofactor. The cofactor is Mn(2+).

It carries out the reaction 2-C-methyl-D-erythritol 4-phosphate + NADP(+) = 1-deoxy-D-xylulose 5-phosphate + NADPH + H(+). Its pathway is isoprenoid biosynthesis; isopentenyl diphosphate biosynthesis via DXP pathway; isopentenyl diphosphate from 1-deoxy-D-xylulose 5-phosphate: step 1/6. Functionally, catalyzes the NADPH-dependent rearrangement and reduction of 1-deoxy-D-xylulose-5-phosphate (DXP) to 2-C-methyl-D-erythritol 4-phosphate (MEP). In Endomicrobium trichonymphae, this protein is 1-deoxy-D-xylulose 5-phosphate reductoisomerase.